A 126-amino-acid polypeptide reads, in one-letter code: Flagellar assembly factor FliW (126 aa).

It belongs to the FliW family. As to quaternary structure, interacts with translational regulator CsrA and flagellin(s).

It localises to the cytoplasm. Functionally, acts as an anti-CsrA protein, binds CsrA and prevents it from repressing translation of its target genes, one of which is flagellin. Binds to flagellin and participates in the assembly of the flagellum. The polypeptide is Flagellar assembly factor FliW (Sulfurimonas denitrificans (strain ATCC 33889 / DSM 1251) (Thiomicrospira denitrificans (strain ATCC 33889 / DSM 1251))).